Here is a 288-residue protein sequence, read N- to C-terminus: Phosphatidylserine decarboxylase proenzyme (288 aa).

Residues Asp-88, His-145, and Ser-248 each act as charge relay system; for autoendoproteolytic cleavage activity in the active site. Residue Ser-248 is the Schiff-base intermediate with substrate; via pyruvic acid; for decarboxylase activity of the active site. Ser-248 carries the post-translational modification Pyruvic acid (Ser); by autocatalysis.

It belongs to the phosphatidylserine decarboxylase family. PSD-B subfamily. Prokaryotic type I sub-subfamily. Heterodimer of a large membrane-associated beta subunit and a small pyruvoyl-containing alpha subunit. Pyruvate is required as a cofactor. Is synthesized initially as an inactive proenzyme. Formation of the active enzyme involves a self-maturation process in which the active site pyruvoyl group is generated from an internal serine residue via an autocatalytic post-translational modification. Two non-identical subunits are generated from the proenzyme in this reaction, and the pyruvate is formed at the N-terminus of the alpha chain, which is derived from the carboxyl end of the proenzyme. The autoendoproteolytic cleavage occurs by a canonical serine protease mechanism, in which the side chain hydroxyl group of the serine supplies its oxygen atom to form the C-terminus of the beta chain, while the remainder of the serine residue undergoes an oxidative deamination to produce ammonia and the pyruvoyl prosthetic group on the alpha chain. During this reaction, the Ser that is part of the protease active site of the proenzyme becomes the pyruvoyl prosthetic group, which constitutes an essential element of the active site of the mature decarboxylase.

It is found in the cell membrane. It catalyses the reaction a 1,2-diacyl-sn-glycero-3-phospho-L-serine + H(+) = a 1,2-diacyl-sn-glycero-3-phosphoethanolamine + CO2. Its pathway is phospholipid metabolism; phosphatidylethanolamine biosynthesis; phosphatidylethanolamine from CDP-diacylglycerol: step 2/2. In terms of biological role, catalyzes the formation of phosphatidylethanolamine (PtdEtn) from phosphatidylserine (PtdSer). The polypeptide is Phosphatidylserine decarboxylase proenzyme (Azoarcus sp. (strain BH72)).